Consider the following 296-residue polypeptide: Uracil phosphoribosyltransferase, chloroplastic (296 aa).

The transit peptide at 1–61 (MACSIGNAFR…SSSLSRRTIR (61 aa)) directs the protein to the chloroplast. A2 bears the N-acetylalanine mark. GTP is bound at residue 148–151 (REPI). 5-phospho-alpha-D-ribose 1-diphosphate contacts are provided by residues R158, R183, D211, 216 to 219 (TGGT), and D282. 281-283 (GDA) serves as a coordination point for uracil.

The protein belongs to the UPRTase family. Mg(2+) is required as a cofactor.

It localises to the plastid. The protein resides in the chloroplast. It carries out the reaction UMP + diphosphate = 5-phospho-alpha-D-ribose 1-diphosphate + uracil. Its pathway is pyrimidine metabolism; UMP biosynthesis via salvage pathway; UMP from uracil: step 1/1. Allosterically activated by GTP. Functionally, uracil phosphoribosyltransferase (UPRT) that catalyzes the conversion of uracil and 5-phospho-alpha-D-ribose 1-diphosphate (PRPP) to UMP and diphosphate. Is probably the only functional UPRT, since the dual-domain proteins of the UKL family seem to lack this activity. This Arabidopsis thaliana (Mouse-ear cress) protein is Uracil phosphoribosyltransferase, chloroplastic (UPP).